The chain runs to 329 residues: DNA-directed RNA polymerase subunit alpha (329 aa).

Positions 1-235 are alpha N-terminal domain (alpha-NTD); sequence MQGSVTEFLK…EQLEAFVDLR (235 aa). Residues 249–329 form an alpha C-terminal domain (alpha-CTD) region; that stretch reads FDPILLRPVD…NWPPASIADE (81 aa).

This sequence belongs to the RNA polymerase alpha chain family. Homodimer. The RNAP catalytic core consists of 2 alpha, 1 beta, 1 beta' and 1 omega subunit. When a sigma factor is associated with the core the holoenzyme is formed, which can initiate transcription.

The enzyme catalyses RNA(n) + a ribonucleoside 5'-triphosphate = RNA(n+1) + diphosphate. In terms of biological role, DNA-dependent RNA polymerase catalyzes the transcription of DNA into RNA using the four ribonucleoside triphosphates as substrates. The polypeptide is DNA-directed RNA polymerase subunit alpha (Shigella flexneri serotype 5b (strain 8401)).